Here is a 342-residue protein sequence, read N- to C-terminus: UDP-xylose transporter 1 (342 aa).

10 consecutive transmembrane segments (helical) span residues 7–27 (MQMGVIGALFLSVASSVSIVI), 36–56 (LGFPFATTLTSWHLMVTYCTL), 75–95 (VVLFGLLNGISIGLLNLSLGF), 100–120 (FYQMTKLAIIPFTVLLETLFL), 132–152 (LFLLLVGVGIASITDLQLNFV), 154–174 (SVLSLLAIATTCVGQILTNTI), 184–204 (QLLYQSAPFQAAILFVSGPFV), 221–241 (IVVGFITLSCLIAVSVNFSTF), 250–270 (VTYQVLGHLKTCLVLAFGYTL), and 280–300 (IAGILIAVLGMLLYSYFCSVA). The interval 305–342 (QASSDSTFLGKDRDTTPLLGQENENHHEAKKLDKHSPV) is disordered. The segment covering 327–342 (NENHHEAKKLDKHSPV) has biased composition (basic and acidic residues).

The protein belongs to the TPT transporter family. TPT (TC 2.A.7.9) subfamily. In terms of tissue distribution, ubiquitous.

It localises to the golgi apparatus membrane. The protein localises to the endoplasmic reticulum membrane. Functionally, nucleotide-sugar transporter that transports UDP-xylose and UMP in a strict counter-exchange mode. The polypeptide is UDP-xylose transporter 1 (Arabidopsis thaliana (Mouse-ear cress)).